A 474-amino-acid chain; its full sequence is Cysteine--tRNA ligase (474 aa).

C27 contributes to the Zn(2+) binding site. The short motif at 29 to 39 is the 'HIGH' region element; sequence ITPYDHMHVGH. C213, H238, and E242 together coordinate Zn(2+). Positions 271–275 match the 'KMSKS' region motif; that stretch reads KMSKS. ATP is bound at residue K274.

The protein belongs to the class-I aminoacyl-tRNA synthetase family. The cofactor is Zn(2+).

It localises to the cytoplasm. It catalyses the reaction tRNA(Cys) + L-cysteine + ATP = L-cysteinyl-tRNA(Cys) + AMP + diphosphate. The polypeptide is Cysteine--tRNA ligase (Pyrobaculum neutrophilum (strain DSM 2338 / JCM 9278 / NBRC 100436 / V24Sta) (Thermoproteus neutrophilus)).